The chain runs to 169 residues: Type II secretion system protein H (169 aa).

Residues 1-29 (MRVARLPLLHPHRAAPVVRRQLRGSSLLE) constitute a propeptide, leader sequence. Position 30 is an N-methylmethionine (Met-30). Residues 32-52 (LVIALIALAGVLAAAALTGGI) form a helical membrane-spanning segment.

This sequence belongs to the GSP H family. In terms of assembly, type II secretion is composed of four main components: the outer membrane complex, the inner membrane complex, the cytoplasmic secretion ATPase and the periplasm-spanning pseudopilus. Interacts with core component XpsG. Interacts with minor pseudopilins XpsI and XpsJ. In terms of processing, cleaved by prepilin peptidase. Methylated by prepilin peptidase at the amino group of the N-terminal phenylalanine once the leader sequence is cleaved by prepilin peptidase.

It localises to the cell inner membrane. Component of the type II secretion system required for the energy-dependent secretion of extracellular factors such as proteases and toxins from the periplasm. Part of the pseudopilus tip complex that is critical for the recognition and binding of secretion substrates. This is Type II secretion system protein H (xpsH) from Xanthomonas campestris pv. campestris (strain ATCC 33913 / DSM 3586 / NCPPB 528 / LMG 568 / P 25).